The following is a 375-amino-acid chain: 2-oxoglutarate synthase subunit KorA (375 aa).

As to quaternary structure, heterotetramer of the KorA, KorB, KorC and KorD subunits.

It catalyses the reaction 2 oxidized [2Fe-2S]-[ferredoxin] + 2-oxoglutarate + CoA = succinyl-CoA + 2 reduced [2Fe-2S]-[ferredoxin] + CO2 + H(+). In Methanothermobacter marburgensis (strain ATCC BAA-927 / DSM 2133 / JCM 14651 / NBRC 100331 / OCM 82 / Marburg) (Methanobacterium thermoautotrophicum), this protein is 2-oxoglutarate synthase subunit KorA (korA).